A 142-amino-acid polypeptide reads, in one-letter code: Putative phosphatidylglycerol/phosphatidylinositol transfer protein 2 (142 aa).

Positions 1–20 (MKFYLYLSILLILLTSTSFG) are cleaved as a signal peptide.

This sequence belongs to the NPC2 family. As to quaternary structure, monomer.

In terms of biological role, catalyzes the intermembrane transfer of phosphatidylglycerol and phosphatidylinositol. The polypeptide is Putative phosphatidylglycerol/phosphatidylinositol transfer protein 2 (Dictyostelium discoideum (Social amoeba)).